The following is a 298-amino-acid chain: ATP phosphoribosyltransferase (298 aa).

The protein belongs to the ATP phosphoribosyltransferase family. Long subfamily. It depends on Mg(2+) as a cofactor.

It is found in the cytoplasm. It catalyses the reaction 1-(5-phospho-beta-D-ribosyl)-ATP + diphosphate = 5-phospho-alpha-D-ribose 1-diphosphate + ATP. It functions in the pathway amino-acid biosynthesis; L-histidine biosynthesis; L-histidine from 5-phospho-alpha-D-ribose 1-diphosphate: step 1/9. Feedback inhibited by histidine. Catalyzes the condensation of ATP and 5-phosphoribose 1-diphosphate to form N'-(5'-phosphoribosyl)-ATP (PR-ATP). Has a crucial role in the pathway because the rate of histidine biosynthesis seems to be controlled primarily by regulation of HisG enzymatic activity. This is ATP phosphoribosyltransferase from Tolumonas auensis (strain DSM 9187 / NBRC 110442 / TA 4).